Here is a 182-residue protein sequence, read N- to C-terminus: MGLLSILRKLKSAPDQEVRILLLGLDNAGKTTLLKQLASEDISHITPTQGFNIKSVQSQGFKLNVWDIGGQRKIRPYWRNYFENTDILIYVIDSADRKRFEETGQELAELLEEEKLSCVPVLIFANKQDLLTAAPASEIAEGLNLHTIRDRVWQIQSCSALTGEGVQDGMNWVCKNVNAKKK.

A lipid anchor (N-myristoyl glycine) is attached at Gly-2. The residue at position 5 (Ser-5) is a Phosphoserine. Residues 24 to 31 (GLDNAGKT), Thr-48, 67 to 71 (DIGGQ), Gly-70, 126 to 129 (NKQD), and 159 to 161 (SAL) each bind GTP. Mg(2+) contacts are provided by Thr-31 and Thr-48.

The protein belongs to the small GTPase superfamily. Arf family. In terms of assembly, found in a complex with ARL3, RP2 and UNC119 (or UNC119B); RP2 induces hydrolysis of GTP ARL3 in the complex, leading to the release of UNC119 (or UNC119B). Interacts with RP2; interaction is direct and stimulated with the activated GTP-bound form of ARL3. Interacts with SYS1. Interacts with ARL2BP; the GTP-bound form interacts with ARL2BP. Microtubule-associated protein. Does not interact with TBCC. Interacts with RP2. Interacts with PDE6D; the interaction occurs specifically with the GTP-bound form of ARL3. Interacts with GGA1; the interaction recruits PKD1:PKD2 complex to trans-Golgi network and is required for ciliary targeting of PKD1:PKD2 complex. Interacts with DNAAF9.

Its subcellular location is the golgi apparatus membrane. The protein resides in the cytoplasm. It localises to the cytoskeleton. It is found in the spindle. The protein localises to the nucleus. Its subcellular location is the microtubule organizing center. The protein resides in the centrosome. It localises to the cell projection. It is found in the cilium. In terms of biological role, small GTP-binding protein which cycles between an inactive GDP-bound and an active GTP-bound form, and the rate of cycling is regulated by guanine nucleotide exchange factors (GEF) and GTPase-activating proteins (GAP). Required for normal cytokinesis and cilia signaling. Requires assistance from GTPase-activating proteins (GAPs) like RP2 and PDE6D, in order to cycle between inactive GDP-bound and active GTP-bound forms. Required for targeting proteins to the cilium, including myristoylated NPHP3 and prenylated INPP5E. Targets NPHP3 to the ciliary membrane by releasing myristoylated NPHP3 from UNC119B cargo adapter into the cilium. Required for PKD1:PKD2 complex targeting from the trans-Golgi network to the cilium. The polypeptide is ADP-ribosylation factor-like protein 3 (ARL3) (Sus scrofa (Pig)).